The sequence spans 381 residues: Protein TRIGALACTOSYLDIACYLGLYCEROL 2, chloroplastic (381 aa).

Residues 1–45 (MIGNPVIQVPSSLMPSSSMIACPRVSPNGVPYLPPKPRTRHLVVR) constitute a chloroplast transit peptide. At 46 to 96 (AASNSDAAHGQPSSDGGKNPLTVVLDVPRNIWRQTLKPLSDFGFGKRSIWE) the chain is on the stromal side. A helical membrane pass occupies residues 97 to 117 (GGVGLFIVSGATLLALSWAWL). Topologically, residues 118 to 381 (RGFQMRSKFR…LLIKSLSRLL (264 aa)) are chloroplast intermembrane.

In terms of assembly, homomultimer. Substrate-binding subunit of the TGD complex, a lipid translocator at the inner chloroplast envelope membrane made of TGD1, TGD2 and TGD3. Interacts with TGD1 and TGD3 with an overall subunit stoichiometry of 2 TGD1, 2 TGD3 and 8 to 12 TGD2. Interacts with TGD5.

The protein localises to the plastid. Its subcellular location is the chloroplast inner membrane. In terms of biological role, component of a phosphatidic acid/lipid transport complex in the chloroplast envelope. Specifically binds phosphatidic acid (PA). Involved in lipid transfer from the endoplasmic reticulum (ER) to plastids, and necessary for thylakoids formation. The polypeptide is Protein TRIGALACTOSYLDIACYLGLYCEROL 2, chloroplastic (Arabidopsis thaliana (Mouse-ear cress)).